A 912-amino-acid chain; its full sequence is Phosphoenolpyruvate carboxylase (912 aa).

Residues histidine 138 and lysine 575 contribute to the active site.

It belongs to the PEPCase type 1 family. Mg(2+) is required as a cofactor.

It carries out the reaction oxaloacetate + phosphate = phosphoenolpyruvate + hydrogencarbonate. Forms oxaloacetate, a four-carbon dicarboxylic acid source for the tricarboxylic acid cycle. The chain is Phosphoenolpyruvate carboxylase from Lactobacillus helveticus (strain DPC 4571).